An 814-amino-acid polypeptide reads, in one-letter code: Spore development regulator umv1 (814 aa).

6 disordered regions span residues 1–36 (MSRP…GSTE), 96–134 (HDRP…VRRG), 267–333 (QGLK…MPRS), 407–441 (PPRD…RAGP), 457–501 (PVRS…ASLT), and 539–814 (QSSG…NQPY). Polar residues predominate over residues 7 to 18 (RSGNASTPQGTS). In terms of domain architecture, Velvet spans 53-274 (RDHIEYQLTV…AEQGLKVRVR (222 aa)). Positions 271 to 285 (VRVRKHPRSRRRGSK) are enriched in basic residues. Over residues 407–423 (PPRDFADGRYMDGDYPP) the composition is skewed to basic and acidic residues. Positions 438-445 (RAGPSEYS) match the Nuclear localization signal motif. A compositionally biased stretch (low complexity) spans 620–631 (AAARRSPIPSAR). Basic and acidic residues-rich tracts occupy residues 723–741 (TRDR…DRDQ) and 760–796 (GELD…RRDF). Residues 800–814 (TMPSKPSSRGHNQPY) show a composition bias toward polar residues.

The protein belongs to the velvet family. VosA subfamily. As to quaternary structure, forms a heterodimeric complex with velB; the formation of the VEL2-VOS1 complex is light-dependent.

It localises to the nucleus. Functionally, component of the velB-VosA heterodimeric complex that plays a dual role in activating genes associated with spore maturation and repressing certain development-associated genes. The complex binds DNA through the DNA-binding domain of vosA that recognizes an 11-nucleotide consensus sequence 5'-CTGGCCGCGGC-3' consisting of two motifs in the promoters of key developmental regulatory genes. Required for gall induction and teliospore formation on seedlings. This Mycosarcoma maydis (Corn smut fungus) protein is Spore development regulator umv1.